We begin with the raw amino-acid sequence, 445 residues long: WD repeat domain phosphoinositide-interacting protein 2 (445 aa).

The WD 1 repeat unit spans residues 182-222; sequence AHDSPLAALAFDASGTKLATASEKGTVIRVFSIPEGQKLFE. The short motif at 223–226 is the L/FRRG motif element; it reads FRRG. 2 WD repeats span residues 228–267 and 311–349; these read KRCV…EKPP and GHKN…GGEC. The residue at position 395 (Ser395) is a Phosphoserine.

Belongs to the WD repeat PROPPIN family. Interacts with TECPR1. Interacts with ATG16L1. Interacts with ATG5. Interacts with WIPI1. Interacts with WDR45. May interact with NUDC. Interacts with ULK1 and RB1CC1.

It is found in the preautophagosomal structure membrane. Component of the autophagy machinery that controls the major intracellular degradation process by which cytoplasmic materials are packaged into autophagosomes and delivered to lysosomes for degradation. Involved in an early step of the formation of preautophagosomal structures. Binds and is activated by phosphatidylinositol 3-phosphate (PtdIns3P) forming on membranes of the endoplasmic reticulum upon activation of the upstream ULK1 and PI3 kinases. Mediates ER-isolation membranes contacts by interacting with the ULK1:RB1CC1 complex and PtdIns3P. Once activated, WIPI2 recruits at phagophore assembly sites the ATG12-ATG5-ATG16L1 complex that directly controls the elongation of the nascent autophagosomal membrane. The protein is WD repeat domain phosphoinositide-interacting protein 2 of Mus musculus (Mouse).